Here is a 449-residue protein sequence, read N- to C-terminus: Probable hexaprenyl pyrophosphate synthase, mitochondrial (449 aa).

Isopentenyl diphosphate is bound by residues lysine 122, arginine 125, and histidine 200. Positions 207 and 211 each coordinate Mg(2+). Position 216 (arginine 216) interacts with an all-trans-polyprenyl diphosphate. Residue arginine 217 coordinates isopentenyl diphosphate. An all-trans-polyprenyl diphosphate-binding residues include lysine 300, threonine 301, glutamine 338, and lysine 355.

It belongs to the FPP/GGPP synthase family. Requires Mg(2+) as cofactor.

It localises to the mitochondrion. It participates in cofactor biosynthesis; ubiquinone biosynthesis. In terms of biological role, assembly of polyisoprenoid side chains. The polyprenyl synthase of coenzyme Q biosynthesis catalyzes the formation from isopentenyl diphosphate of all trans-polyprenyl pyrophosphates generally ranging in length of between 6 and 10 isoprene units depending on the species. This is Probable hexaprenyl pyrophosphate synthase, mitochondrial from Neurospora crassa (strain ATCC 24698 / 74-OR23-1A / CBS 708.71 / DSM 1257 / FGSC 987).